The following is a 412-amino-acid chain: Peptidase T (412 aa).

H78 contributes to the Zn(2+) binding site. Residue D80 is part of the active site. D140 contacts Zn(2+). The active-site Proton acceptor is the E174. Residues E175, D197, and H379 each contribute to the Zn(2+) site.

Belongs to the peptidase M20B family. The cofactor is Zn(2+).

The protein localises to the cytoplasm. The catalysed reaction is Release of the N-terminal residue from a tripeptide.. Cleaves the N-terminal amino acid of tripeptides. The polypeptide is Peptidase T (Staphylococcus epidermidis (strain ATCC 12228 / FDA PCI 1200)).